We begin with the raw amino-acid sequence, 295 residues long: Pyridoxal 5'-phosphate synthase subunit PdxS (295 aa).

Aspartate 25 contributes to the D-ribose 5-phosphate binding site. The active-site Schiff-base intermediate with D-ribose 5-phosphate is the lysine 82. Residue glycine 154 coordinates D-ribose 5-phosphate. Arginine 166 serves as a coordination point for D-glyceraldehyde 3-phosphate. Residues glycine 215 and 236–237 (GS) each bind D-ribose 5-phosphate.

This sequence belongs to the PdxS/SNZ family. As to quaternary structure, in the presence of PdxT, forms a dodecamer of heterodimers.

The enzyme catalyses aldehydo-D-ribose 5-phosphate + D-glyceraldehyde 3-phosphate + L-glutamine = pyridoxal 5'-phosphate + L-glutamate + phosphate + 3 H2O + H(+). It functions in the pathway cofactor biosynthesis; pyridoxal 5'-phosphate biosynthesis. In terms of biological role, catalyzes the formation of pyridoxal 5'-phosphate from ribose 5-phosphate (RBP), glyceraldehyde 3-phosphate (G3P) and ammonia. The ammonia is provided by the PdxT subunit. Can also use ribulose 5-phosphate and dihydroxyacetone phosphate as substrates, resulting from enzyme-catalyzed isomerization of RBP and G3P, respectively. In Pasteurella multocida (strain Pm70), this protein is Pyridoxal 5'-phosphate synthase subunit PdxS.